We begin with the raw amino-acid sequence, 230 residues long: Interleukin-6 (230 aa).

Positions methionine 1–glycine 24 are cleaved as a signal peptide. Cysteine 96 and cysteine 106 are joined by a disulfide. The N-linked (GlcNAc...) asparagine glycan is linked to asparagine 100. A compositionally biased stretch (basic and acidic residues) spans arginine 206–glycine 218. Residues arginine 206–threonine 230 form a disordered region.

The protein belongs to the IL-6 superfamily. As to quaternary structure, component of a hexamer of two molecules each of IL6, IL6R and IL6ST; first binds to IL6R to associate with the signaling subunit IL6ST. Expressed in kidney and spleen. Low expression in liver and gills.

It is found in the secreted. In terms of biological role, cytokine with a wide variety of biological functions in immunity, tissue regeneration, and metabolism. Binds to IL6R, then the complex associates to the signaling subunit IL6ST/gp130 to trigger the intracellular IL6-signaling pathway. The interaction with the membrane-bound IL6R and IL6ST stimulates 'classic signaling', whereas the binding of IL6 and soluble IL6R to IL6ST stimulates 'trans-signaling'. Alternatively, 'cluster signaling' occurs when membrane-bound IL6:IL6R complexes on transmitter cells activate IL6ST receptors on neighboring receiver cells. This chain is Interleukin-6 (il6), found in Paralichthys olivaceus (Bastard halibut).